A 425-amino-acid chain; its full sequence is CinA-like protein (425 aa).

Belongs to the CinA family.

The sequence is that of CinA-like protein from Shewanella sp. (strain MR-4).